We begin with the raw amino-acid sequence, 250 residues long: ATP synthase subunit b 2 (250 aa).

A helical membrane pass occupies residues 2–22 (LIDWFTVFAQILNFVILLGLL).

The protein belongs to the ATPase B chain family. In terms of assembly, F-type ATPases have 2 components, F(1) - the catalytic core - and F(0) - the membrane proton channel. F(1) has five subunits: alpha(3), beta(3), gamma(1), delta(1), epsilon(1). F(0) has four main subunits: a(1), b(1), b'(1) and c(10-14). The alpha and beta chains form an alternating ring which encloses part of the gamma chain. F(1) is attached to F(0) by a central stalk formed by the gamma and epsilon chains, while a peripheral stalk is formed by the delta, b and b' chains.

It localises to the cellular thylakoid membrane. Functionally, f(1)F(0) ATP synthase produces ATP from ADP in the presence of a proton or sodium gradient. F-type ATPases consist of two structural domains, F(1) containing the extramembraneous catalytic core and F(0) containing the membrane proton channel, linked together by a central stalk and a peripheral stalk. During catalysis, ATP synthesis in the catalytic domain of F(1) is coupled via a rotary mechanism of the central stalk subunits to proton translocation. In terms of biological role, component of the F(0) channel, it forms part of the peripheral stalk, linking F(1) to F(0). The protein is ATP synthase subunit b 2 of Picosynechococcus sp. (strain ATCC 27264 / PCC 7002 / PR-6) (Agmenellum quadruplicatum).